A 367-amino-acid chain; its full sequence is Folliculin-like protein bhd1 (367 aa).

2 disordered regions span residues 41-75 and 92-115; these read RSIGVTENGNDSPEAFKNELDNRNNADSQSLQSST and SKGPESPRVNSFHNSYSRNQSPIS. Basic and acidic residues predominate over residues 54 to 64; the sequence is EAFKNELDNRN. Polar residues-rich tracts occupy residues 65–75 and 99–115; these read NADSQSLQSST and RVNSFHNSYSRNQSPIS. A uDENN FLCN/SMCR8-type domain is found at 131–302; it reads FSVPDVQPRL…SNIGTAPSYE (172 aa).

The protein belongs to the folliculin family.

It is found in the nucleus. Its subcellular location is the cytoplasm. The chain is Folliculin-like protein bhd1 (bhd1) from Schizosaccharomyces pombe (strain 972 / ATCC 24843) (Fission yeast).